Here is a 189-residue protein sequence, read N- to C-terminus: MKKSLFATGLAIAIALPFGANAADYVIDTKGAHASINFKVSHLGYSFIKGRFNTFSGDFSFDEKNIADSKVNVVVDTTSLDSNHAERDKHIRSGDFIDAGKYSEATFNSTKVVDKGNGKLGVTGDLTLHGVTKPITIEAEFVGAGNDPWGGERAGFIGQTRLELADFEIPVMGSSSYVDMELHIEGVKK.

Positions 1 to 22 (MKKSLFATGLAIAIALPFGANA) are cleaved as a signal peptide.

Belongs to the UPF0312 family. Type 1 subfamily.

Its subcellular location is the periplasm. In Vibrio campbellii (strain ATCC BAA-1116), this protein is UPF0312 protein VIBHAR_05924.